Here is a 199-residue protein sequence, read N- to C-terminus: MQIILLERIEKLGAIGDEVTVKDGYARNFLLPNKKALRANEANRKVFEANRARIEAENAARRDEAQNESGNVEGKEVVLIRASSNAGQLYGSVSVRDISDALAEQGAKVTKSMIVLERPIKTIGVYDVRVSLHPEVSVTVKVNVARSPDEAELQSKGVNVIDAMFDNETGGFTEEYDPNAEPGEIPTELLEGGEEAAEA.

Positions T169 to A199 are disordered.

The protein belongs to the bacterial ribosomal protein bL9 family.

Functionally, binds to the 23S rRNA. This Novosphingobium aromaticivorans (strain ATCC 700278 / DSM 12444 / CCUG 56034 / CIP 105152 / NBRC 16084 / F199) protein is Large ribosomal subunit protein bL9.